A 245-amino-acid chain; its full sequence is tRNA pseudouridine synthase A (245 aa).

The Nucleophile role is filled by Asp52. Substrate is bound at residue Tyr111.

It belongs to the tRNA pseudouridine synthase TruA family. As to quaternary structure, homodimer.

It catalyses the reaction uridine(38/39/40) in tRNA = pseudouridine(38/39/40) in tRNA. In terms of biological role, formation of pseudouridine at positions 38, 39 and 40 in the anticodon stem and loop of transfer RNAs. This is tRNA pseudouridine synthase A from Rickettsia peacockii (strain Rustic).